The primary structure comprises 959 residues: Glycine dehydrogenase (decarboxylating) (959 aa).

N6-(pyridoxal phosphate)lysine is present on K708.

It belongs to the GcvP family. As to quaternary structure, the glycine cleavage system is composed of four proteins: P, T, L and H. Requires pyridoxal 5'-phosphate as cofactor.

The catalysed reaction is N(6)-[(R)-lipoyl]-L-lysyl-[glycine-cleavage complex H protein] + glycine + H(+) = N(6)-[(R)-S(8)-aminomethyldihydrolipoyl]-L-lysyl-[glycine-cleavage complex H protein] + CO2. Functionally, the glycine cleavage system catalyzes the degradation of glycine. The P protein binds the alpha-amino group of glycine through its pyridoxal phosphate cofactor; CO(2) is released and the remaining methylamine moiety is then transferred to the lipoamide cofactor of the H protein. This chain is Glycine dehydrogenase (decarboxylating), found in Serratia proteamaculans (strain 568).